The chain runs to 394 residues: Phosphoglycerate kinase (394 aa).

Substrate-binding positions include 21–23 (DFN), Arg36, 59–62 (HFGR), Arg118, and Arg151. ATP contacts are provided by residues Lys201, Glu323, and 349 to 352 (GGDS).

This sequence belongs to the phosphoglycerate kinase family. In terms of assembly, monomer.

Its subcellular location is the cytoplasm. It catalyses the reaction (2R)-3-phosphoglycerate + ATP = (2R)-3-phospho-glyceroyl phosphate + ADP. Its pathway is carbohydrate degradation; glycolysis; pyruvate from D-glyceraldehyde 3-phosphate: step 2/5. This Brevibacillus brevis (strain 47 / JCM 6285 / NBRC 100599) protein is Phosphoglycerate kinase.